Reading from the N-terminus, the 62-residue chain is UPF0434 protein RSc2531 (62 aa).

The protein belongs to the UPF0434 family.

The polypeptide is UPF0434 protein RSc2531 (Ralstonia nicotianae (strain ATCC BAA-1114 / GMI1000) (Ralstonia solanacearum)).